Here is a 319-residue protein sequence, read N- to C-terminus: Ubiquinone biosynthesis protein COQ4, mitochondrial (319 aa).

The N-terminal 28 residues, 1-28 (MISRSIFSKSVSLQRSQNRSFLLTAASA), are a transit peptide targeting the mitochondrion. Zn(2+)-binding residues include His-205, Asp-206, His-209, and Glu-221.

This sequence belongs to the COQ4 family. As to quaternary structure, component of a multi-subunit COQ enzyme complex, composed of at least COQ3, COQ4, COQ5, COQ6, COQ7 and COQ9. The cofactor is Zn(2+).

Its subcellular location is the mitochondrion inner membrane. The catalysed reaction is a 4-hydroxy-3-methoxy-5-(all-trans-polyprenyl)benzoate + H(+) = a 2-methoxy-6-(all-trans-polyprenyl)phenol + CO2. It functions in the pathway cofactor biosynthesis; ubiquinone biosynthesis. Lyase that catalyzes the C1-decarboxylation of 4-hydroxy-3-methoxy-5-(all-trans-polyprenyl)benzoic acid into 2-methoxy-6-(all-trans-polyprenyl)phenol during ubiquinone biosynthesis. In Clavispora lusitaniae (strain ATCC 42720) (Yeast), this protein is Ubiquinone biosynthesis protein COQ4, mitochondrial.